A 154-amino-acid chain; its full sequence is C-type lectin 16 (154 aa).

Positions 1-20 (MALSLYLIAVICSLVGFTAS) are cleaved as a signal peptide. The region spanning 27-152 (DNRFCFPNVV…CASMRRFVCE (126 aa)) is the C-type lectin domain. 2 disulfides stabilise this stretch: cysteine 46–cysteine 151 and cysteine 123–cysteine 143.

(Microbial infection) Interacts with non-structural protein 1 of dengue virus type 2. Interacts with envelope protein E of dengue virus type 2. As to expression, female salivary gland (at protein level). Not detected in female carcass without salivary glands (at protein level). Not detected in male tissues (at protein level).

The protein localises to the secreted. Functionally, putative lectin. May have a regulatory role in mosquito immunity. Probably suppresses replication of dengue virus type 2 in mosquito salivary glands. This is C-type lectin 16 from Aedes aegypti (Yellowfever mosquito).